The following is a 784-amino-acid chain: Ent-kaurene synthase 1, chloroplastic (784 aa).

The N-terminal 28 residues, 1–28, are a transit peptide targeting the chloroplast; it reads MNLSLCIASPLLTKSSRPTALSAIHTAS. Mg(2+) contacts are provided by Asp-528, Asp-532, Asn-672, and Glu-680. The DDXXD motif signature appears at 528–532; the sequence is DDFFD.

This sequence belongs to the terpene synthase family. It depends on Mg(2+) as a cofactor. Accumulates in leaves.

It localises to the plastid. The protein resides in the chloroplast. It catalyses the reaction ent-copalyl diphosphate = ent-kaur-16-ene + diphosphate. The protein operates within secondary metabolite biosynthesis; terpenoid biosynthesis. It functions in the pathway plant hormone biosynthesis; gibberellin biosynthesis. Functionally, involved in the biosynthesis of ent-kaurene diterpenoids natural products such as oridonin, miltiradiene, eriocalyxin B and nezukol, known to exhibit antitumor, anti-inflammatory and antibacterial activities, and in the production of gibberellins phytohormones. Catalyzes the conversion of ent-copalyl diphosphate (ent-CPP) to ent-kaurene. This chain is Ent-kaurene synthase 1, chloroplastic, found in Stevia rebaudiana (Stevia).